A 420-amino-acid chain; its full sequence is Dual-specificity RNA methyltransferase RlmN (420 aa).

E115 (proton acceptor) is an active-site residue. The region spanning D121–D388 is the Radical SAM core domain. The cysteines at positions 128 and 393 are disulfide-linked. Residues C135, C139, and C142 each coordinate [4Fe-4S] cluster. Residues G217–E218, S249, S271–H273, and N350 contribute to the S-adenosyl-L-methionine site. The active-site S-methylcysteine intermediate is the C393.

It belongs to the radical SAM superfamily. RlmN family. Requires [4Fe-4S] cluster as cofactor.

It is found in the cytoplasm. It catalyses the reaction adenosine(2503) in 23S rRNA + 2 reduced [2Fe-2S]-[ferredoxin] + 2 S-adenosyl-L-methionine = 2-methyladenosine(2503) in 23S rRNA + 5'-deoxyadenosine + L-methionine + 2 oxidized [2Fe-2S]-[ferredoxin] + S-adenosyl-L-homocysteine. It carries out the reaction adenosine(37) in tRNA + 2 reduced [2Fe-2S]-[ferredoxin] + 2 S-adenosyl-L-methionine = 2-methyladenosine(37) in tRNA + 5'-deoxyadenosine + L-methionine + 2 oxidized [2Fe-2S]-[ferredoxin] + S-adenosyl-L-homocysteine. Specifically methylates position 2 of adenine 2503 in 23S rRNA and position 2 of adenine 37 in tRNAs. m2A2503 modification seems to play a crucial role in the proofreading step occurring at the peptidyl transferase center and thus would serve to optimize ribosomal fidelity. The protein is Dual-specificity RNA methyltransferase RlmN of Sphingopyxis alaskensis (strain DSM 13593 / LMG 18877 / RB2256) (Sphingomonas alaskensis).